The primary structure comprises 251 residues: MRKNIVAGNWKMNKTLQEGLALAKELDAALKGRTINCDVIIGTPFIHLASIAAAIDTTRIGVAAENCADKESGAYTGEVSAAMVASTGARYVIIGHSERRAYYHETSPILMEKVKLALSNGLTPIFCVGEVLEEREAGKHFEVVARQVEEALFTLDQTDFAKLILAYEPVWAIGTGKTATADQAQEMHAHIRKSIAAKYGKEVANGCSILYGGSCNAANAKELFSRADVDGGLIGGASLSVDKFLPIIEAF.

Position 9–11 (9–11) interacts with substrate; that stretch reads NWK. The Electrophile role is filled by His-96. Glu-168 (proton acceptor) is an active-site residue. Substrate-binding positions include Gly-174, Ser-214, and 235 to 236; that span reads GG.

Belongs to the triosephosphate isomerase family. In terms of assembly, homodimer.

It is found in the cytoplasm. The enzyme catalyses D-glyceraldehyde 3-phosphate = dihydroxyacetone phosphate. The protein operates within carbohydrate biosynthesis; gluconeogenesis. It functions in the pathway carbohydrate degradation; glycolysis; D-glyceraldehyde 3-phosphate from glycerone phosphate: step 1/1. Functionally, involved in the gluconeogenesis. Catalyzes stereospecifically the conversion of dihydroxyacetone phosphate (DHAP) to D-glyceraldehyde-3-phosphate (G3P). The sequence is that of Triosephosphate isomerase from Porphyromonas gingivalis (strain ATCC BAA-308 / W83).